The sequence spans 460 residues: GTPase Der (460 aa).

EngA-type G domains follow at residues 2-166 (KTIA…AEER) and 175-353 (TRIA…QERK). GTP contacts are provided by residues 8 to 15 (GRPNVGKS), 55 to 59 (DTGGL), 118 to 121 (NKLD), 181 to 188 (GQPNAGKS), 228 to 232 (DTAGL), and 293 to 296 (NKID). Positions 354 to 446 (KRIPTHRLTQ…LLWKWRKAEG (93 aa)) constitute a KH-like domain.

It belongs to the TRAFAC class TrmE-Era-EngA-EngB-Septin-like GTPase superfamily. EngA (Der) GTPase family. As to quaternary structure, associates with the 50S ribosomal subunit.

Its function is as follows. GTPase that plays an essential role in the late steps of ribosome biogenesis. This Methylacidiphilum infernorum (isolate V4) (Methylokorus infernorum (strain V4)) protein is GTPase Der.